The primary structure comprises 186 residues: Mating-type-like protein ALPHA2 (186 aa).

The segment at residues 108–170 is a DNA-binding region (homeobox; TALE-type); sequence ASYRGHRFTR…NRRRKQKSIY (63 aa).

The protein belongs to the TALE/M-ATYP homeobox family.

It is found in the nucleus. Its function is as follows. Mating type proteins are sequence specific DNA-binding proteins that act as master switches in yeast differentiation by controlling gene expression in a cell type-specific fashion. This chain is Mating-type-like protein ALPHA2 (MTL1ALPHA2), found in Candida glabrata (strain ATCC 2001 / BCRC 20586 / JCM 3761 / NBRC 0622 / NRRL Y-65 / CBS 138) (Yeast).